Reading from the N-terminus, the 692-residue chain is Elongation factor G (692 aa).

Residues 8 to 283 (NRIRNIGIAA…AVIDYLPAPT (276 aa)) enclose the tr-type G domain. GTP-binding positions include 17–24 (AHIDAGKT), 81–85 (DTPGH), and 135–138 (NKMD).

This sequence belongs to the TRAFAC class translation factor GTPase superfamily. Classic translation factor GTPase family. EF-G/EF-2 subfamily.

The protein resides in the cytoplasm. In terms of biological role, catalyzes the GTP-dependent ribosomal translocation step during translation elongation. During this step, the ribosome changes from the pre-translocational (PRE) to the post-translocational (POST) state as the newly formed A-site-bound peptidyl-tRNA and P-site-bound deacylated tRNA move to the P and E sites, respectively. Catalyzes the coordinated movement of the two tRNA molecules, the mRNA and conformational changes in the ribosome. The sequence is that of Elongation factor G from Helicobacter acinonychis (strain Sheeba).